The chain runs to 814 residues: Pre-rRNA-processing protein TSR1 homolog (814 aa).

The interval 1–67 is disordered; that stretch reads MADHAFHRPG…NQMNQLRKNK (67 aa). Residues 16–27 show a composition bias toward basic residues; that stretch reads NKAHKTGRHRSK. A Bms1-type G domain is found at 84–249; the sequence is APFLVCLLPM…MRRIGGQKKR (166 aa). 2 disordered regions span residues 316–357 and 392–448; these read PYKL…DAEQ and WIPD…EEFQ. A compositionally biased stretch (basic and acidic residues) spans 317–340; the sequence is YKLDKSRDGENSEVRLLDRSDPSK. Positions 395–426 are enriched in acidic residues; sequence DVEEVEDPDGKDDDDMSEDDDDDKEDDNEDFM. Residues 431 to 442 are compositionally biased toward basic and acidic residues; the sequence is KSFEDEYEKRDS. Residue Thr-444 is modified to Phosphothreonine.

It belongs to the TRAFAC class translation factor GTPase superfamily. Bms1-like GTPase family. TSR1 subfamily.

The protein localises to the nucleus. It is found in the nucleolus. Its function is as follows. Required during maturation of the 40S ribosomal subunit in the nucleolus. This Drosophila melanogaster (Fruit fly) protein is Pre-rRNA-processing protein TSR1 homolog.